The sequence spans 2957 residues: Toxin PAU_02230 (2957 aa).

Residues 949-968 (TSVSPAETAQSTPEPLSDFA) are disordered. Residues 2115 to 2144 (EWFKHSETGLKGGGPIDDIRKYIARKSAIK) form a membrane localization domain that interacts with the inner leaflet of the plasma membrane region. The tract at residues 2115–2449 (EWFKHSETGL…TSTIVTPLAP (335 aa)) is tyrosine glycosyltransferase PaToxG. UDP-N-acetyl-alpha-D-glucosamine is bound by residues 2169–2171 (IWI) and 2259–2260 (SD). 2 residues coordinate a divalent metal cation: Asp2276 and Asp2278. The short motif at 2276–2279 (DIDD) is the DxDD motif element. Asn2312 serves as a coordination point for UDP-N-acetyl-alpha-D-glucosamine. The sseI-like deamidase PaToxD stretch occupies residues 2450–2672 (KTEMLPPVPS…NYSVNPTAEN (223 aa)). Active-site for deamidase activity residues include Cys2509, His2547, and Asp2562. The interval 2667–2705 (NPTAENLSPPPPPPIPSHGQVPKTVTPPPPPMRSPLSLS) is disordered.

A divalent metal cation is required as a cofactor.

It is found in the secreted. The protein localises to the host cell membrane. It carries out the reaction L-tyrosyl-[protein] + UDP-N-acetyl-alpha-D-glucosamine = O-(N-acetyl-alpha-D-glucosaminyl)-L-tyrosyl-[protein] + UDP + H(+). The enzyme catalyses L-glutaminyl-[protein] + H2O = L-glutamyl-[protein] + NH4(+). Toxin that acts on host cells by modifying Rho proteins by tyrosine GlcNAcylation and heterotrimeric G alpha proteins by deamidation. Catalyzes the mono-O-GlcNAcylation of small GTPases of the Rho family (RhoA, RhoB, RhoC, Rac1, Rac2, Rac3, Cdc42) in eukaryotic host cells at the conserved tyrosine residue located in the switch I region (Tyr-32/34), using UDP-N-acetylglucosamine (UDP-GlcNAc) as the sugar donor; other GTPases of the Rho, Ras or Rab families are not substrates. Tyrosine glycosylation inhibits Rho activation and prevents interaction with downstream effectors, resulting in actin disassembly, inhibition of phagocytosis, cell rounding, and toxicity toward insects and mammalian cells. Also catalyzes the deamidation of the catalytic glutamine in heterotrimeric G alpha proteins (Gi, Gq/11), which blocks GTP hydrolysis and arrests the G proteins in a permanent active state leading to activation of Rho GTPases. Thus, PaTox hijacks host GTPase signaling in a bidirectional manner by deamidation-induced activation and glycosylation-induced inactivation of GTPases. This Photorhabdus asymbiotica subsp. asymbiotica (strain ATCC 43949 / 3105-77) (Xenorhabdus luminescens (strain 2)) protein is Toxin PAU_02230.